Reading from the N-terminus, the 249-residue chain is ATP synthase subunit a, chloroplastic (249 aa).

5 consecutive transmembrane segments (helical) span residues 40-60 (QVLI…VLAI), 97-117 (VPFI…GALL), 136-156 (INTT…AGLS), 201-221 (LVVV…VMFL), and 222-242 (GLFT…AYIG).

Belongs to the ATPase A chain family. As to quaternary structure, F-type ATPases have 2 components, CF(1) - the catalytic core - and CF(0) - the membrane proton channel. CF(1) has five subunits: alpha(3), beta(3), gamma(1), delta(1), epsilon(1). CF(0) has four main subunits: a, b, b' and c.

Its subcellular location is the plastid. The protein resides in the chloroplast thylakoid membrane. Functionally, key component of the proton channel; it plays a direct role in the translocation of protons across the membrane. The sequence is that of ATP synthase subunit a, chloroplastic from Lepidium virginicum (Virginia pepperweed).